The chain runs to 318 residues: C1GALT1-specific chaperone 1 (318 aa).

Topologically, residues 1 to 6 (MLSESS) are cytoplasmic. Residues 7 to 26 (SFLKGVMLGSIFCALITMLG) traverse the membrane as a helical; Signal-anchor for type II membrane protein segment. Over 27–318 (HIRIGHGNRM…FLPPNGSDND (292 aa)) the chain is Lumenal.

This sequence belongs to the glycosyltransferase 31 family. Beta3-Gal-T subfamily. As to quaternary structure, associates with core 1 beta-3-galactosyltransferase (C1GALT1), probably not with the soluble active form. Ubiquitously expressed. Abundantly expressed in salivary gland, stomach, small intestine, kidney, and testis and at intermediate levels in whole brain, cerebellum, spinal cord, thymus, spleen, trachea, lung, pancreas, ovary, and uterus.

Its subcellular location is the membrane. Functionally, probable chaperone required for the generation of 1 O-glycan Gal-beta1-3GalNAc-alpha1-Ser/Thr (T antigen), which is a precursor for many extended O-glycans in glycoproteins. Probably acts as a specific molecular chaperone assisting the folding/stability of core 1 beta-3-galactosyltransferase (C1GALT1). This is C1GALT1-specific chaperone 1 (C1GALT1C1) from Homo sapiens (Human).